A 965-amino-acid chain; its full sequence is Sarcosine oxidase subunit alpha (965 aa).

NAD(+) is bound by residues Ala-139, Asp-158, Glu-159, Arg-160, Thr-166, Val-205, Ala-418, Leu-423, and Thr-425. (6R)-5,10-methylene-5,6,7,8-tetrahydrofolate is bound by residues Thr-692 and Glu-784.

Belongs to the GcvT family. As to quaternary structure, heterotetramer composed of subunits alpha (SoxA), beta (SoxB), gamma (SoxG) and delta (SoxD). NAD(+) is required as a cofactor.

Its subcellular location is the cytoplasm. The catalysed reaction is sarcosine + (6S)-5,6,7,8-tetrahydrofolate + O2 = (6R)-5,10-methylene-5,6,7,8-tetrahydrofolate + glycine + H2O2. It catalyses the reaction sarcosine + O2 + H2O = formaldehyde + glycine + H2O2. Inhibited by Zn(2+), Cu(2+), Cd(2+), Hg(2+), Ag(+), p-chloromercuribenzoate (p-CMB), iodoacetamide, N-ethylmaleimide, CN(-), o-phenanthroline and sodium lauryl sulfate. In terms of biological role, in the presence of tetrahydrofolate, catalyzes the oxidative demethylation of sarcosine to yield glycine, 5,10-methylenetetrahydrofolate and hydrogen peroxide. In the absence of tetrahydrofolate, catalyzes the oxidative demethylation of sarcosine to yield glycine, formaldehyde and hydrogen peroxide. Can also use N-methyl-L-alanine and N-ethyl-L-glycine. Is very specific for oxygen as an acceptor. The chain is Sarcosine oxidase subunit alpha from Corynebacterium sp. (strain U-96).